A 309-amino-acid polypeptide reads, in one-letter code: tRNA pseudouridine synthase B (309 aa).

Asp-51 acts as the Nucleophile in catalysis.

The protein belongs to the pseudouridine synthase TruB family. Type 1 subfamily.

The enzyme catalyses uridine(55) in tRNA = pseudouridine(55) in tRNA. Its function is as follows. Responsible for synthesis of pseudouridine from uracil-55 in the psi GC loop of transfer RNAs. The protein is tRNA pseudouridine synthase B of Coxiella burnetii (strain Dugway 5J108-111).